The sequence spans 699 residues: SPS-sensor serine protease component SSY5 (699 aa).

2 disordered regions span residues 1–113 and 128–158; these read MVRF…LQGF and PVKE…ENAR. Positions 1–381 are excised as a propeptide; that stretch reads MVRFFGLNKK…YCVKDYIKKA (381 aa). Residues 24-38 are compositionally biased toward polar residues; the sequence is NEQNAAETSSSNVSG. Residues 39 to 51 show a composition bias toward basic and acidic residues; it reads NEERIDPNSHDTN. Residues 61-78 are compositionally biased toward low complexity; it reads STTFGSSIQSSSIFSRGR. Residues 83–93 are compositionally biased toward polar residues; that stretch reads TGASSSMATSE. Composition is skewed to low complexity over residues 97–109 and 144–154; these read HSSG…NSKN and SSSTSSTLATS. The interval 459–699 is serine protease; that stretch reads FAITCAHVVL…QWDIDPQLDG (241 aa). Active-site charge relay system residues include H465, D545, and S640.

It belongs to the peptidase S64 family. In terms of assembly, component of the plasma membrane SPS (SSY1-PTR3-SSY5) amino acid sensor complex. In terms of processing, the propeptide is autoproteolytically cleaved from the catalytic domain but remains associated, forming an inactive protease complex. This processing occurs even in the absence of signaling.

The protein localises to the cell membrane. In terms of biological role, protease component of the SPS-sensor system, which regulates the expression of several amino acid-metabolizing enzymes and amino acid- and peptide-permeases in response to extracellular amino acid levels by controlling the activity of two transcription factors, STP1 and STP2. Catalyzes the activation of these transcription factors, which are synthesized as latent cytoplasmic precursors, by proteolytic removal of an N-terminal inhibitory domain containing cytoplasmic retention motifs. SSY5 binds as an inactive protease complex to STP1. In response to extracellular amino acids and dependent on the other SPS-sensor components, the inhibitory propeptide is induced to dissociate, and thereby enables the catalytic domain to process STP1. The sequence is that of SPS-sensor serine protease component SSY5 (SSY5) from Saccharomyces cerevisiae (strain ATCC 204508 / S288c) (Baker's yeast).